The following is a 226-amino-acid chain: ATP synthase F(0) complex subunit a (226 aa).

Transmembrane regions (helical) follow at residues 6 to 26, 68 to 88, 97 to 117, 138 to 158, 164 to 184, and 193 to 213; these read FATF…IMLF, WALM…LGLL, QLSM…LMGF, VPML…ALAV, ITAG…LCSI, and FIIL…QAYV.

The protein belongs to the ATPase A chain family. Component of the ATP synthase complex composed at least of ATP5F1A/subunit alpha, ATP5F1B/subunit beta, ATP5MC1/subunit c (homooctomer), MT-ATP6/subunit a, MT-ATP8/subunit 8, ATP5ME/subunit e, ATP5MF/subunit f, ATP5MG/subunit g, ATP5MK/subunit k, ATP5MJ/subunit j, ATP5F1C/subunit gamma, ATP5F1D/subunit delta, ATP5F1E/subunit epsilon, ATP5PF/subunit F6, ATP5PB/subunit b, ATP5PD/subunit d, ATP5PO/subunit OSCP. ATP synthase complex consists of a soluble F(1) head domain (subunits alpha(3) and beta(3)) - the catalytic core - and a membrane F(0) domain - the membrane proton channel (subunits c, a, 8, e, f, g, k and j). These two domains are linked by a central stalk (subunits gamma, delta, and epsilon) rotating inside the F1 region and a stationary peripheral stalk (subunits F6, b, d, and OSCP). Interacts with DNAJC30; interaction is direct.

The protein localises to the mitochondrion inner membrane. The catalysed reaction is H(+)(in) = H(+)(out). Subunit a, of the mitochondrial membrane ATP synthase complex (F(1)F(0) ATP synthase or Complex V) that produces ATP from ADP in the presence of a proton gradient across the membrane which is generated by electron transport complexes of the respiratory chain. ATP synthase complex consist of a soluble F(1) head domain - the catalytic core - and a membrane F(1) domain - the membrane proton channel. These two domains are linked by a central stalk rotating inside the F(1) region and a stationary peripheral stalk. During catalysis, ATP synthesis in the catalytic domain of F(1) is coupled via a rotary mechanism of the central stalk subunits to proton translocation. With the subunit c (ATP5MC1), forms the proton-conducting channel in the F(0) domain, that contains two crucial half-channels (inlet and outlet) that facilitate proton movement from the mitochondrial intermembrane space (IMS) into the matrix. Protons are taken up via the inlet half-channel and released through the outlet half-channel, following a Grotthuss mechanism. The sequence is that of ATP synthase F(0) complex subunit a from Osphranter robustus (Wallaroo).